Consider the following 348-residue polypeptide: Rhodopsin (348 aa).

Position 1 is an N-acetylmethionine (methionine 1). At 1–36 the chain is on the extracellular side; that stretch reads MNGTEGPNFYVPFSNKTGVVRSPFEFPQYYLAEPWQ. N-linked (GlcNAc...) asparagine glycans are attached at residues asparagine 2 and asparagine 15. Residues 37–61 form a helical membrane-spanning segment; the sequence is FSMLAAYMFLLIVLGFPINFLTLYV. Topologically, residues 62–73 are cytoplasmic; the sequence is TVQHKKLRTPLN. The chain crosses the membrane as a helical span at residues 74-96; sequence YILLNLAVADLFMVFGGFTTTLY. At 97–110 the chain is on the extracellular side; sequence TSLHGYFVFGPTGC. The cysteines at positions 110 and 187 are disulfide-linked. The chain crosses the membrane as a helical span at residues 111 to 133; sequence NLEGFFATLGGEIALWSLVVLAI. A 'Ionic lock' involved in activated form stabilization motif is present at residues 134–136; it reads ERY. Residues 134–152 lie on the Cytoplasmic side of the membrane; sequence ERYVVVCKPMSNFRFGENH. A helical membrane pass occupies residues 153-173; that stretch reads AIMGVGFTWVMALACAAPPLV. Residues 174–202 are Extracellular-facing; the sequence is GWSRYIPEGMQCSCGIDYYTLKPEVNNES. Residue glutamate 201 coordinates Zn(2+). Residues 203 to 224 form a helical membrane-spanning segment; it reads FVIYMFVVHFTIPMIVIFFCYG. At 225-252 the chain is on the cytoplasmic side; that stretch reads QLVFTVKEAAAQQQESATTQKAEKEVTR. Residues 253–274 traverse the membrane as a helical segment; that stretch reads MVIIMVIAFLICWVPYASVAFY. Over 275 to 286 the chain is Extracellular; that stretch reads IFTHQGSNFGPI. Zn(2+) is bound at residue glutamine 279. The helical transmembrane segment at 287–308 threads the bilayer; that stretch reads FMTLPAFFAKAASIYNPVIYIM. Lysine 296 is modified (N6-(retinylidene)lysine). Over 309 to 348 the chain is Cytoplasmic; sequence MNKQFRTCMITTLCCGKNPLGDDEVSASASKTETSQVAPA. 2 S-palmitoyl cysteine lipidation sites follow: cysteine 322 and cysteine 323. The segment at 330–348 is interaction with SAG; sequence DDEVSASASKTETSQVAPA. 2 positions are modified to phosphoserine: serine 334 and serine 338. Phosphothreonine occurs at positions 340 and 342. A Phosphoserine modification is found at serine 343.

The protein belongs to the G-protein coupled receptor 1 family. Opsin subfamily. In terms of assembly, homodimer. May form a complex composed of RHO, GRK1 and RCVRN in a Ca(2+)-dependent manner; RCVRN prevents the interaction between GRK1 and RHO. Interacts with GRK1. Interacts (phosphorylated form) with SAG. Interacts with GNAT1. Interacts with GNAT3. SAG and G-proteins compete for a common binding site. Interacts with PRCD; the interaction promotes PRCD stability. Forms a complex with ASAP1 and ARF4. Forms a complex with ASAP1, RAB11A, Rabin8/RAB3IP, ARF4 and RAB11FIP3; the complex regulates Golgi-to-cilia rhodopsin/RHO transport in photoreceptors. In terms of processing, phosphorylated on some or all of the serine and threonine residues present in the C-terminal region. Post-translationally, contains one covalently linked retinal chromophore. Upon light absorption, the covalently bound 11-cis-retinal is converted to all-trans-retinal. After hydrolysis of the Schiff base and release of the covalently bound all-trans-retinal, active rhodopsin is regenerated by binding of a fresh molecule of 11-cis-retinal.

Its subcellular location is the membrane. It localises to the cell projection. It is found in the cilium. The protein resides in the photoreceptor outer segment. In terms of biological role, photoreceptor required for image-forming vision at low light intensity. Required for photoreceptor cell viability after birth. Light-induced isomerization of 11-cis to all-trans retinal triggers a conformational change that activates signaling via G-proteins. Subsequent receptor phosphorylation mediates displacement of the bound G-protein alpha subunit by the arrestin SAG and terminates signaling. The chain is Rhodopsin (RHO) from Phoca vitulina (Harbor seal).